The sequence spans 79 residues: Small ribosomal subunit protein bS21 (79 aa).

The interval 58–79 (ARKKMQREGLLPMKPKPMPGMR) is disordered.

It belongs to the bacterial ribosomal protein bS21 family.

This Beijerinckia indica subsp. indica (strain ATCC 9039 / DSM 1715 / NCIMB 8712) protein is Small ribosomal subunit protein bS21.